We begin with the raw amino-acid sequence, 298 residues long: ADP/ATP translocase 3 (298 aa).

Residue Met-1 is modified to N-acetylmethionine. At 1–7 (MTEQAIS) the chain is on the mitochondrial intermembrane side. Thr-2 carries the post-translational modification N-acetylthreonine; in ADP/ATP translocase 3, N-terminally processed. Residues 6–98 (ISFAKDFLAG…FAFKDKYKQI (93 aa)) form a Solcar 1 repeat. Residues 8–37 (FAKDFLAGGIAAAISKTAVAPIERVKLLLQ) form a helical membrane-spanning segment. The Mitochondrial matrix portion of the chain corresponds to 38–74 (VQHASKQIAADKQYKGIVDCIVRIPKEQGVLSFWRGN). Lys-52 is subject to N6,N6,N6-trimethyllysine. The chain crosses the membrane as a helical span at residues 75–99 (LANVIRYFPTQALNFAFKDKYKQIF). The ADP site is built by Arg-80 and Lys-92. The Mitochondrial intermembrane portion of the chain corresponds to 100-109 (LGGVDKRTQF). Lys-105 carries the post-translational modification N6-acetyllysine. A helical membrane pass occupies residues 110–130 (WRYFAGNLASGGAAGATSLCF). Solcar repeat units lie at residues 111–201 (RYFA…AKGM) and 212–297 (VSWM…LKKV). Residues 131 to 178 (VYPLDFARTRLAADVGKSGSEREFRGLGDCLVKITKSDGIRGLYQGFN) are Mitochondrial matrix-facing. Residues 179 to 199 (VSVQGIIIYRAAYFGIYDTAK) traverse the membrane as a helical segment. Over 200–210 (GMLPDPKNTHI) the chain is Mitochondrial intermembrane. Residues 211-231 (VVSWMIAQTVTAVAGVVSYPF) traverse the membrane as a helical segment. The Mitochondrial matrix portion of the chain corresponds to 232–273 (DTVRRRMMMQSGRKGADIMYKGTVDCWRKILKDEGGKAFFKG). Position 235 (Arg-235) interacts with ADP. Residues 235 to 240 (RRRMMM) form an important for transport activity region. A Nucleotide carrier signature motif motif is present at residues 235-240 (RRRMMM). An N6-acetyllysine modification is found at Lys-268. Residues 274–291 (AWSNVLRGMGGAFVLVLY) traverse the membrane as a helical segment. At 292–298 (DELKKVI) the chain is on the mitochondrial intermembrane side.

It belongs to the mitochondrial carrier (TC 2.A.29) family. As to quaternary structure, monomer. Found in a complex with ARL2, ARL2BP and SLC25A6/ANT3. Post-translationally, trimethylated by ANTKMT at Lys-52.

It localises to the mitochondrion inner membrane. The protein localises to the membrane. It carries out the reaction ADP(in) + ATP(out) = ADP(out) + ATP(in). It catalyses the reaction H(+)(in) = H(+)(out). The matrix-open state (m-state) is inhibited by the membrane-permeable bongkrekic acid (BKA). The cytoplasmic-open state (c-state) is inhibited by the membrane-impermeable toxic inhibitor carboxyatractyloside (CATR). Proton transporter activity is inhibited by ADP:ATP antiporter activity. In terms of biological role, ADP:ATP antiporter that mediates import of ADP into the mitochondrial matrix for ATP synthesis, and export of ATP out to fuel the cell. Cycles between the cytoplasmic-open state (c-state) and the matrix-open state (m-state): operates by the alternating access mechanism with a single substrate-binding site intermittently exposed to either the cytosolic (c-state) or matrix (m-state) side of the inner mitochondrial membrane. In addition to its ADP:ATP antiporter activity, also involved in mitochondrial uncoupling and mitochondrial permeability transition pore (mPTP) activity. Plays a role in mitochondrial uncoupling by acting as a proton transporter: proton transport uncouples the proton flows via the electron transport chain and ATP synthase to reduce the efficiency of ATP production and cause mitochondrial thermogenesis. Proton transporter activity is inhibited by ADP:ATP antiporter activity, suggesting that SLC25A6/ANT3 acts as a master regulator of mitochondrial energy output by maintaining a delicate balance between ATP production (ADP:ATP antiporter activity) and thermogenesis (proton transporter activity). Proton transporter activity requires free fatty acids as cofactor, but does not transport it. Also plays a key role in mPTP opening, a non-specific pore that enables free passage of the mitochondrial membranes to solutes of up to 1.5 kDa, and which contributes to cell death. It is however unclear if SLC25A6/ANT3 constitutes a pore-forming component of mPTP or regulates it. The chain is ADP/ATP translocase 3 from Bos taurus (Bovine).